The sequence spans 275 residues: Tumor necrosis factor receptor superfamily member 14 (275 aa).

A signal peptide spans 1-38 (MEPLPGWGSAPWSQAPTDNTFRLVPCVFLLNLLQRISA). TNFR-Cys repeat units follow at residues 41 to 75 (SCRQ…GTVC), 77 to 119 (PCPP…DTVC), and 120 to 162 (RCIP…DTVC). Intrachain disulfides connect Cys-42–Cys-53, Cys-54–Cys-67, Cys-57–Cys-75, Cys-78–Cys-93, Cys-96–Cys-111, Cys-99–Cys-119, Cys-121–Cys-138, and Cys-144–Cys-162. N-linked (GlcNAc...) asparagine glycans are attached at residues Asn-184 and Asn-197. The helical transmembrane segment at 211 to 231 (VVSILLPLVIVGAGIAGFLIC) threads the bilayer.

It belongs to the tumor necrosis factor receptor superfamily. In terms of assembly, interacts with TRAF2, TRAF3 and TRAF5. Interacts (via CRD1/TNFR-Cys 1) with CD160; this interaction is direct. Interacts (via CRD1/TNFR-Cys 1) with BTLA; this interaction is direct. In terms of processing, N-glycosylated. Expressed at mucosal sites including colon and pulmonary epithelial cells. Expressed in naive T cells.

The protein resides in the cell membrane. Functionally, receptor for four distinct ligands: The TNF superfamily members TNFSF14/LIGHT and homotrimeric LTA/lymphotoxin-alpha and the immunoglobulin superfamily members BTLA and CD160, altogether defining a complex stimulatory and inhibitory signaling network. Signals via the TRAF2-TRAF3 E3 ligase pathway to promote immune cell survival and differentiation. Participates in bidirectional cell-cell contact signaling between antigen presenting cells and lymphocytes. In response to ligation of TNFSF14/LIGHT, delivers costimulatory signals to T cells, promoting cell proliferation and effector functions. Interacts with CD160 on NK cells, enhancing IFNG production and anti-tumor immune response. In the context of bacterial infection, acts as a signaling receptor on epithelial cells for CD160 from intraepithelial lymphocytes, triggering the production of antimicrobial proteins and pro-inflammatory cytokines. Upon binding to CD160 on activated CD4+ T cells, down-regulates CD28 costimulatory signaling, restricting memory and alloantigen-specific immune response. May interact in cis (on the same cell) or in trans (on other cells) with BTLA. In cis interactions, appears to play an immune regulatory role inhibiting in trans interactions in naive T cells to maintain a resting state. In trans interactions, can predominate during adaptive immune response to provide survival signals to effector T cells. This chain is Tumor necrosis factor receptor superfamily member 14, found in Mus musculus (Mouse).